Reading from the N-terminus, the 514-residue chain is 1-pyrroline-5-carboxylate dehydrogenase (514 aa).

Catalysis depends on residues glutamate 286 and cysteine 320.

It belongs to the aldehyde dehydrogenase family. RocA subfamily.

It carries out the reaction L-glutamate 5-semialdehyde + NAD(+) + H2O = L-glutamate + NADH + 2 H(+). Its pathway is amino-acid degradation; L-proline degradation into L-glutamate; L-glutamate from L-proline: step 2/2. This is 1-pyrroline-5-carboxylate dehydrogenase from Staphylococcus epidermidis (strain ATCC 12228 / FDA PCI 1200).